Here is a 228-residue protein sequence, read N- to C-terminus: LHFPL tetraspan subfamily member 2 protein (228 aa).

Helical transmembrane passes span 11–31 (MLWT…FMSA), 102–122 (IFLA…VFTM), 132–152 (IFNV…LGLI), and 181–201 (LGWA…CAVF).

Belongs to the LHFP family. As to expression, expressed in all tissues and cell lines examined except brain and peripheral blood leukocytes.

It is found in the membrane. Plays a role in female and male fertility. Involved in distal reproductive tract development. The polypeptide is LHFPL tetraspan subfamily member 2 protein (Homo sapiens (Human)).